The chain runs to 375 residues: EP300-interacting inhibitor of differentiation 3 (375 aa).

A coiled-coil region spans residues 23-51; that stretch reads AWQHLVKQEEEEAVKKEEKEEGEDEEEEG. Positions 30–68 are disordered; that stretch reads QEEEEAVKKEEKEEGEDEEEEGSDSSSDDPNPEPPCMHP. Residues 42 to 60 show a composition bias toward acidic residues; the sequence is EEGEDEEEEGSDSSSDDPN.

Belongs to the NSE4 family. As to quaternary structure, component of the SMC5-SMC6 complex which consists at least of SMC5, SMC6, NSMCE2, NSMCE1, NSMCE4A or EID3 and NSMCE3; EID3 seems to be a testis-specific subunit. NSMCE1, NSMCE4A or EID3 and NSMCE3 probably form a subcomplex that bridges the head domains of the SMC5:SMC6 heterodimer. Homodimer, and heterodimer with EID2. Interacts with the C-terminal region of CREBBP.

The protein localises to the nucleus. It localises to the cytoplasm. It is found in the chromosome. The protein resides in the telomere. Its function is as follows. Tissue-specific component of the SMC5-SMC6 complex, a complex involved in repair of DNA double-strand breaks by homologous recombination. The complex may promote sister chromatid homologous recombination by recruiting the SMC1-SMC3 cohesin complex to double-strand breaks. The complex is required for telomere maintenance via recombination and mediates sumoylation of shelterin complex (telosome) components. Acts as a repressor of nuclear receptor-dependent transcription possibly by interfering with CREBBP-dependent coactivation. May function as a coinhibitor of other CREBBP/EP300-dependent transcription factors. This is EP300-interacting inhibitor of differentiation 3 from Mus musculus (Mouse).